The chain runs to 188 residues: UPF0301 protein Smlt1098 (188 aa).

It belongs to the UPF0301 (AlgH) family.

The polypeptide is UPF0301 protein Smlt1098 (Stenotrophomonas maltophilia (strain K279a)).